The primary structure comprises 138 residues: ATP synthase epsilon chain (138 aa).

This sequence belongs to the ATPase epsilon chain family. In terms of assembly, F-type ATPases have 2 components, CF(1) - the catalytic core - and CF(0) - the membrane proton channel. CF(1) has five subunits: alpha(3), beta(3), gamma(1), delta(1), epsilon(1). CF(0) has three main subunits: a, b and c.

The protein localises to the cell membrane. Functionally, produces ATP from ADP in the presence of a proton gradient across the membrane. The protein is ATP synthase epsilon chain of Streptococcus equinus (Streptococcus bovis).